A 109-amino-acid polypeptide reads, in one-letter code: Putative double-stranded DNA mimic protein YciU (109 aa).

Belongs to the putative dsDNA mimic protein family.

May act as a double-stranded DNA (dsDNA) mimic. Probably regulates the activity of a dsDNA-binding protein. The polypeptide is Putative double-stranded DNA mimic protein YciU (Escherichia coli O45:K1 (strain S88 / ExPEC)).